The primary structure comprises 102 residues: Large ribosomal subunit protein uL24 (102 aa).

It belongs to the universal ribosomal protein uL24 family. As to quaternary structure, part of the 50S ribosomal subunit.

In terms of biological role, one of two assembly initiator proteins, it binds directly to the 5'-end of the 23S rRNA, where it nucleates assembly of the 50S subunit. Functionally, one of the proteins that surrounds the polypeptide exit tunnel on the outside of the subunit. The sequence is that of Large ribosomal subunit protein uL24 from Burkholderia mallei (strain NCTC 10229).